The chain runs to 155 residues: S-ribosylhomocysteine lyase (155 aa).

His-54, His-58, and Cys-122 together coordinate Fe cation.

It belongs to the LuxS family. As to quaternary structure, homodimer. It depends on Fe cation as a cofactor.

The catalysed reaction is S-(5-deoxy-D-ribos-5-yl)-L-homocysteine = (S)-4,5-dihydroxypentane-2,3-dione + L-homocysteine. In terms of biological role, involved in the synthesis of autoinducer 2 (AI-2) which is secreted by bacteria and is used to communicate both the cell density and the metabolic potential of the environment. The regulation of gene expression in response to changes in cell density is called quorum sensing. Catalyzes the transformation of S-ribosylhomocysteine (RHC) to homocysteine (HC) and 4,5-dihydroxy-2,3-pentadione (DPD). This chain is S-ribosylhomocysteine lyase, found in Deinococcus geothermalis (strain DSM 11300 / CIP 105573 / AG-3a).